The following is an 86-amino-acid chain: RNA-binding protein Hfq (86 aa).

Positions 9–68 (DPYLNTLRKEKVPVSIYLVNGIKLQGQIESFDQFVVLLKNTVSQMVYKHAISTVVPARPV) constitute a Sm domain. Residues 66–86 (RPVRLPSPSDAEHGDSEPGNA) are disordered. Basic and acidic residues predominate over residues 75–86 (DAEHGDSEPGNA).

This sequence belongs to the Hfq family. Homohexamer.

RNA chaperone that binds small regulatory RNA (sRNAs) and mRNAs to facilitate mRNA translational regulation in response to envelope stress, environmental stress and changes in metabolite concentrations. Also binds with high specificity to tRNAs. The polypeptide is RNA-binding protein Hfq (Pseudomonas entomophila (strain L48)).